The following is a 128-amino-acid chain: AECKTTIDSTDQMSFNTKAIEIDKACKTFTVELTHSGSLPKNVMGHNLVISKQADMQPIATDGLSAGIDKNYLKEGDTRVIAHTKVIGAGEKDSLTIDVSKLNAAEKYGFFCSFPGHISMMKGTVTLK.

The Plastocyanin-like domain maps to 1–128 (AECKTTIDST…SMMKGTVTLK (128 aa)). Cys3 and Cys26 form a disulfide bridge. Cu cation-binding residues include His46, Cys112, His117, and Met121.

Its subcellular location is the periplasm. Functionally, transfers electrons from cytochrome c551 to cytochrome oxidase. This chain is Azurin, found in Pseudomonas fluorescens biotype B.